The sequence spans 196 residues: Agamous-like MADS-box protein AGL31 (196 aa).

Residues 1-61 enclose the MADS-box domain; the sequence is MGRKKVEIKR…GKLYKSASGD (61 aa). The 91-residue stretch at 80 to 170 folds into the K-box domain; that stretch reads ALDLAEKTRN…ASQVGKKTFL (91 aa).

Expressed in most plant tissues, roots, seedlings, leaves, stems, inflorescences, pollen, siliques and flowers.

It is found in the nucleus. Functionally, probable transcription factor that prevents vernalization by short periods of cold. Acts as a floral repressor. The polypeptide is Agamous-like MADS-box protein AGL31 (AGL31) (Arabidopsis thaliana (Mouse-ear cress)).